We begin with the raw amino-acid sequence, 204 residues long: Large ribosomal subunit protein eL15y (204 aa).

Belongs to the eukaryotic ribosomal protein eL15 family.

This is Large ribosomal subunit protein eL15y (SB62) from Picea mariana (Black spruce).